We begin with the raw amino-acid sequence, 146 residues long: Hemoglobin subunit beta (146 aa).

N-acetylvaline is present on V1. The Globin domain maps to 2–146 (HLTGEEKSAV…VANALAHKYH (145 aa)). T12 is modified (phosphothreonine). At S44 the chain carries Phosphoserine. The residue at position 59 (K59) is an N6-acetyllysine. H63 is a binding site for heme b. K82 is modified (N6-acetyllysine). Heme b is bound at residue H92. Position 93 is an S-nitrosocysteine (C93). K144 carries the N6-acetyllysine modification.

Belongs to the globin family. Heterotetramer of two alpha chains and two beta chains. As to expression, red blood cells.

Its function is as follows. Involved in oxygen transport from the lung to the various peripheral tissues. This is Hemoglobin subunit beta (HBB) from Mico argentatus (Silvery marmoset).